Here is a 219-residue protein sequence, read N- to C-terminus: Protein DCL homolog, chloroplastic (219 aa).

The N-terminal 48 residues, 1 to 48, are a transit peptide targeting the chloroplast; that stretch reads MSLASIPSSSPVASPYFRCRTYIFSFSSSPLCLYFPRGDSTSLRPRVR. Residues 70 to 96 form a disordered region; sequence LRRPRIASEESSEEEEEEEEENSEGDE. The span at 79-96 shows a compositional bias: acidic residues; it reads ESSEEEEEEEEENSEGDE.

Expressed in leaves, stems, flowers and siliques.

It is found in the plastid. The protein localises to the chloroplast. Required for normal plastid function and plant development. Required for correct plastid ribosome assembly. Required for processing and maturation of 4.5S rRNA. In Arabidopsis thaliana (Mouse-ear cress), this protein is Protein DCL homolog, chloroplastic.